A 101-amino-acid chain; its full sequence is Large ribosomal subunit protein bL21 (101 aa).

Belongs to the bacterial ribosomal protein bL21 family. In terms of assembly, part of the 50S ribosomal subunit. Contacts protein L20.

Its function is as follows. This protein binds to 23S rRNA in the presence of protein L20. The sequence is that of Large ribosomal subunit protein bL21 from Magnetococcus marinus (strain ATCC BAA-1437 / JCM 17883 / MC-1).